A 243-amino-acid polypeptide reads, in one-letter code: Max-interacting protein 1 (243 aa).

The bHLH domain occupies 76–128; that stretch reads HYRSTHNELEKNRRAHLRLCLERLKTLIPLGPECSRHTTLGLLNKAKAHIKKL. The segment at 164–235 is disordered; sequence EAERIRTDSM…TASDEGYSSC (72 aa). The span at 188 to 198 shows a compositional bias: acidic residues; the sequence is DQEEMEVDVES. Residues 222-235 show a composition bias toward polar residues; the sequence is SLQSTASDEGYSSC.

As to quaternary structure, efficient DNA binding requires dimerization with another bHLH protein. Binds DNA as a heterodimer with MAX.

It is found in the nucleus. Its function is as follows. Transcriptional repressor. MXI1 binds with MAX to form a sequence-specific DNA-binding protein complex which recognizes the core sequence 5'-CAC[GA]TG-3'. MXI1 thus antagonizes MYC transcriptional activity by competing for MAX. The protein is Max-interacting protein 1 (mxi1) of Danio rerio (Zebrafish).